The sequence spans 246 residues: Bis(5'-nucleosyl)-tetraphosphatase PrpE [asymmetrical] (246 aa).

This sequence belongs to the PrpE family. Ni(2+) serves as cofactor.

It carries out the reaction P(1),P(4)-bis(5'-guanosyl) tetraphosphate + H2O = GMP + GTP + 2 H(+). Functionally, asymmetrically hydrolyzes Ap4p to yield AMP and ATP. The polypeptide is Bis(5'-nucleosyl)-tetraphosphatase PrpE [asymmetrical] (Bacillus cereus (strain Q1)).